The sequence spans 174 residues: Gamma-crystallin C (174 aa).

Beta/gamma crystallin 'Greek key' domains lie at 2-40 and 41-83; these read GKIT…RVDS and GCWM…RLIP. Cysteine 23 is modified (S-methylcysteine). A connecting peptide region spans residues 84–87; it reads HAGS. 2 Beta/gamma crystallin 'Greek key' domains span residues 88 to 128 and 129 to 171; these read HRMR…QVLE and GCWV…RRVV.

Belongs to the beta/gamma-crystallin family.

Functionally, crystallins are the dominant structural components of the vertebrate eye lens. The sequence is that of Gamma-crystallin C (Crygc) from Mus musculus (Mouse).